Here is a 133-residue protein sequence, read N- to C-terminus: Small ribosomal subunit protein uS11 (133 aa).

Belongs to the universal ribosomal protein uS11 family. As to quaternary structure, part of the 30S ribosomal subunit. Interacts with proteins S7 and S18. Binds to IF-3.

In terms of biological role, located on the platform of the 30S subunit, it bridges several disparate RNA helices of the 16S rRNA. Forms part of the Shine-Dalgarno cleft in the 70S ribosome. This chain is Small ribosomal subunit protein uS11, found in Ralstonia nicotianae (strain ATCC BAA-1114 / GMI1000) (Ralstonia solanacearum).